We begin with the raw amino-acid sequence, 1055 residues long: Endo-1,4-beta-xylanase A (1055 aa).

The N-terminal stretch at Met1–Ala29 is a signal peptide. An a region spans residues Ala30 to Met357. Positions Glu360 to Pro688 constitute a GH10 domain. Residue Glu498 is the Proton donor of the active site. Glu604 serves as the catalytic Nucleophile. 2 CBM-cenC domains span residues Pro720 to Gln851 and Lys895 to Asn1040.

This sequence belongs to the glycosyl hydrolase 10 (cellulase F) family.

It catalyses the reaction Endohydrolysis of (1-&gt;4)-beta-D-xylosidic linkages in xylans.. This Thermotoga neapolitana protein is Endo-1,4-beta-xylanase A (xynA).